The following is a 261-amino-acid chain: Cytochrome c oxidase subunit 3 (261 aa).

The Mitochondrial matrix portion of the chain corresponds to M1–P15. Residues W16–W34 traverse the membrane as a helical segment. Over F35 to L40 the chain is Mitochondrial intermembrane. Residues I41–T66 traverse the membrane as a helical segment. The Mitochondrial matrix segment spans residues F67 to T72. Residues P73–S105 traverse the membrane as a helical segment. Residues L106–E128 are Mitochondrial intermembrane-facing. Residues V129 to M152 traverse the membrane as a helical segment. Residues E153–N155 are Mitochondrial matrix-facing. Residues R156–E183 traverse the membrane as a helical segment. Residues A184–D190 are Mitochondrial intermembrane-facing. Residues G191–L223 form a helical membrane-spanning segment. Over K224–H232 the chain is Mitochondrial matrix. A helical membrane pass occupies residues F233–I256. At Y257–S261 the chain is on the mitochondrial intermembrane side.

This sequence belongs to the cytochrome c oxidase subunit 3 family. In terms of assembly, component of the cytochrome c oxidase (complex IV, CIV), a multisubunit enzyme composed of 14 subunits. The complex is composed of a catalytic core of 3 subunits MT-CO1, MT-CO2 and MT-CO3, encoded in the mitochondrial DNA, and 11 supernumerary subunits COX4I, COX5A, COX5B, COX6A, COX6B, COX6C, COX7A, COX7B, COX7C, COX8 and NDUFA4, which are encoded in the nuclear genome. The complex exists as a monomer or a dimer and forms supercomplexes (SCs) in the inner mitochondrial membrane with NADH-ubiquinone oxidoreductase (complex I, CI) and ubiquinol-cytochrome c oxidoreductase (cytochrome b-c1 complex, complex III, CIII), resulting in different assemblies (supercomplex SCI(1)III(2)IV(1) and megacomplex MCI(2)III(2)IV(2)).

It is found in the mitochondrion inner membrane. It catalyses the reaction 4 Fe(II)-[cytochrome c] + O2 + 8 H(+)(in) = 4 Fe(III)-[cytochrome c] + 2 H2O + 4 H(+)(out). Its function is as follows. Component of the cytochrome c oxidase, the last enzyme in the mitochondrial electron transport chain which drives oxidative phosphorylation. The respiratory chain contains 3 multisubunit complexes succinate dehydrogenase (complex II, CII), ubiquinol-cytochrome c oxidoreductase (cytochrome b-c1 complex, complex III, CIII) and cytochrome c oxidase (complex IV, CIV), that cooperate to transfer electrons derived from NADH and succinate to molecular oxygen, creating an electrochemical gradient over the inner membrane that drives transmembrane transport and the ATP synthase. Cytochrome c oxidase is the component of the respiratory chain that catalyzes the reduction of oxygen to water. Electrons originating from reduced cytochrome c in the intermembrane space (IMS) are transferred via the dinuclear copper A center (CU(A)) of subunit 2 and heme A of subunit 1 to the active site in subunit 1, a binuclear center (BNC) formed by heme A3 and copper B (CU(B)). The BNC reduces molecular oxygen to 2 water molecules using 4 electrons from cytochrome c in the IMS and 4 protons from the mitochondrial matrix. The polypeptide is Cytochrome c oxidase subunit 3 (MT-CO3) (Hippopotamus amphibius (Hippopotamus)).